A 440-amino-acid chain; its full sequence is Chitinase-like protein Idgf5 (440 aa).

The N-terminal stretch at 1–27 (MRNKMIYFNFHLFVIIFANLQIFQVQA) is a signal peptide. Positions 28 to 439 (ANIFCYYDTQ…KSIHNAFKKF (412 aa)) constitute a GH18 domain. Cys32 and Cys56 are disulfide-bonded. N-linked (GlcNAc...) asparagine glycans are attached at residues Asn126, Asn283, and Asn403. Cys340 and Cys421 are oxidised to a cystine.

This sequence belongs to the glycosyl hydrolase 18 family. IDGF subfamily. Glycosylated.

It localises to the secreted. Cooperates with insulin-like peptides to stimulate the proliferation, polarization and motility of imaginal disk cells. May act by stabilizing the binding of insulin-like peptides to its receptor through a simultaneous interaction with both molecules to form a multiprotein signaling complex. The polypeptide is Chitinase-like protein Idgf5 (Idgf5) (Glossina morsitans morsitans (Savannah tsetse fly)).